A 75-amino-acid polypeptide reads, in one-letter code: Conotoxin Vn5.6 (75 aa).

The first 19 residues, 1–19 (MLCLPVFIILLLLASPAAP), serve as a signal peptide directing secretion. Residues 20–59 (NPLEKRIQSDLIRAALEDADMKTGEREILNIIDSISDVAK) constitute a propeptide that is removed on maturation. Glutamine 60 is modified (pyrrolidone carboxylic acid).

It belongs to the conotoxin T superfamily. In terms of processing, contains 2 disulfide bonds that can be either 'C1-C3, C2-C4' or 'C1-C4, C2-C3', since these disulfide connectivities have been observed for conotoxins with cysteine framework V (for examples, see AC P0DQQ7 and AC P81755). In terms of tissue distribution, expressed by the venom duct.

Its subcellular location is the secreted. In Conus ventricosus (Mediterranean cone), this protein is Conotoxin Vn5.6.